The following is a 498-amino-acid chain: Glycylpeptide N-tetradecanoyltransferase 2 (498 aa).

Residues 1–87 (MAEDSESAAS…QPPSKNSTIP (87 aa)) form a disordered region. Positions 15 to 32 (ELDDQDTCGIDGDNEEET) are enriched in acidic residues. S38 is modified (phosphoserine). Residues 46–57 (KKKKKKQKRKKE) show a composition bias toward basic residues. Polar residues predominate over residues 61 to 72 (SGGTKSDSASDS). Tetradecanoyl-CoA-binding residues include H117, W122, L250, V252, S258, R260, V261, and A262.

The protein belongs to the NMT family.

The protein localises to the cytoplasm. Its subcellular location is the membrane. The enzyme catalyses N-terminal glycyl-[protein] + tetradecanoyl-CoA = N-tetradecanoylglycyl-[protein] + CoA + H(+). It carries out the reaction N-terminal glycyl-L-lysyl-[protein] + tetradecanoyl-CoA = N-terminal glycyl-(N(6)-tetradecanoyl)-L-lysyl-[protein] + CoA + H(+). Its function is as follows. Adds a myristoyl group to the N-terminal glycine residue of certain cellular and viral proteins. Also able to mediate N-terminal lysine myristoylation of proteins: catalyzes myristoylation of ARF6 on both 'Gly-2' and 'Lys-3'. Lysine myristoylation is required to maintain ARF6 on membranes during the GTPase cycle. The chain is Glycylpeptide N-tetradecanoyltransferase 2 (NMT2) from Bos taurus (Bovine).